Here is a 507-residue protein sequence, read N- to C-terminus: Maturase K (507 aa).

The protein belongs to the intron maturase 2 family. MatK subfamily.

The protein localises to the plastid. It is found in the chloroplast. Its function is as follows. Usually encoded in the trnK tRNA gene intron. Probably assists in splicing its own and other chloroplast group II introns. The polypeptide is Maturase K (Lens culinaris (Lentil)).